Consider the following 503-residue polypeptide: uncharacterized protein (503 aa).

This sequence belongs to the Mg-chelatase subunits D/I family. ComM subfamily.

This is an uncharacterized protein from Mycobacterium tuberculosis (strain CDC 1551 / Oshkosh).